Consider the following 358-residue polypeptide: Trans-enoyl reductase pvhC (358 aa).

NADP(+) is bound at residue 48-51 (VDSK). 134-141 (ISFLTSGL) serves as a coordination point for substrate. NADP(+) contacts are provided by residues 169-172 (SSSC), 192-195 (SPHN), Tyr-210, and 257-258 (LE). 278–282 (GPSLL) lines the substrate pocket. Residue 347–348 (VS) participates in NADP(+) binding.

It belongs to the zinc-containing alcohol dehydrogenase family. In terms of assembly, monomer.

It functions in the pathway secondary metabolite biosynthesis. Functionally, trans-enoyl reductase; part of the gene cluster that mediates the biosynthesis of varicidin A, an antifungal natural product containing a cis-octahydrodecalin core. The PKS module of pvhA together with the enoylreductase pvhC catalyze the formation of the polyketide unit which is then conjugated to L-isoleucine by the condensation domain of the NRPS module. Activity of the Dieckmann cyclase domain (RED) of pvhA results in release of an acyclic tetramate. The cytochrome P450 monooxygenase pvhE then catalyzes the oxidation of the C21 methyl group to a to carboxylate group. The methyltransferase pvhD then further methylates the pvhE product. The Diels-Alderase pvhB is able to catalyze Diels-Alder cycloaddition using both pvhE and pvhD products as substrates to form the decalin ring, yielding varicidin B and A, respectively. The chain is Trans-enoyl reductase pvhC from Talaromyces variabilis (Penicillium variabile).